Here is a 300-residue protein sequence, read N- to C-terminus: Heme A synthase (300 aa).

Residues 1 to 8 (MLKEKNLK) are Cytoplasmic-facing. The chain crosses the membrane as a helical span at residues 9–29 (WLSLFTTVLMLFVQIGGALVT). Topologically, residues 30–64 (KTGSADGCGSSWPLCHGKFVPTHIPKETLIELAHR) are extracellular. An intrachain disulfide couples C37 to C44. E60 is a catalytic residue. Position 63 (H63) interacts with heme o. Residues 65–85 (GVSGLALLSVTWLVILSIKYI) traverse the membrane as a helical segment. Residues 86-92 (GHKKETK) are Cytoplasmic-facing. Residues 93-113 (FLCYMSIGFIFAQALIGAAAV) form a helical membrane-spanning segment. Topologically, residues 114 to 123 (MWQQNGFVLA) are extracellular. A helical membrane pass occupies residues 124-144 (LHFGISLISFSAVFLLTLLIF). H125 contacts heme o. The Cytoplasmic segment spans residues 145-163 (EVDQKFDATKLILQPKLRR). The helical transmembrane segment at 164–184 (HTIGLTSFIYFVIYSGALVRH) threads the bilayer. Residues 185-218 (EKASLACSSWPLCRKGAFILPQNFYEWVQMSHRT) are Extracellular-facing. The cysteines at positions 191 and 197 are disulfide-linked. Residue H216 coordinates heme b. The chain crosses the membrane as a helical span at residues 219–239 (LAFILFIWLTYVAFHAMRNYA). Topologically, residues 240 to 249 (QYRVIKYGYM) are cytoplasmic. Residues 250–270 (IAFILICLQVTTGALTIFTAV) traverse the membrane as a helical segment. At 271–275 (NLYIA) the chain is on the extracellular side. Residues 276–296 (LLHALFITLLFGLLCYFILLI) form a helical membrane-spanning segment. H278 is a heme b binding site. The Cytoplasmic segment spans residues 297-300 (SRAK).

This sequence belongs to the COX15/CtaA family. Type 1 subfamily. In terms of assembly, interacts with CtaB. Heme b serves as cofactor.

Its subcellular location is the cell membrane. It carries out the reaction Fe(II)-heme o + 2 A + H2O = Fe(II)-heme a + 2 AH2. Its pathway is porphyrin-containing compound metabolism; heme A biosynthesis; heme A from heme O: step 1/1. Its function is as follows. Catalyzes the conversion of heme O to heme A by two successive hydroxylations of the methyl group at C8. The first hydroxylation forms heme I, the second hydroxylation results in an unstable dihydroxymethyl group, which spontaneously dehydrates, resulting in the formyl group of heme A. The sequence is that of Heme A synthase from Macrococcus caseolyticus (strain JCSC5402) (Macrococcoides caseolyticum).